A 1938-amino-acid polypeptide reads, in one-letter code: Histone-lysine N-methyltransferase SETD1B (1938 aa).

The span at Met1–Arg20 shows a compositional bias: basic and acidic residues. The segment at Met1 to Ser44 is disordered. The 89-residue stretch at Asp111–Lys199 folds into the RRM domain. Disordered regions lie at residues Leu226–Phe357, Phe369–Ala484, Leu496–Pro630, Gly652–Pro688, Lys916–Val1125, His1147–Asp1174, Met1187–Glu1206, Lys1327–Leu1373, Phe1413–Met1468, Glu1496–Pro1528, and Asp1744–Glu1772. Composition is skewed to polar residues over residues Val254–Pro290, Pro298–Pro312, Leu375–Ser407, and Asp446–Gln457. A compositionally biased stretch (low complexity) spans Ser512 to Ser531. 2 stretches are compositionally biased toward polar residues: residues His532–Gly546 and Ser569–Gln585. Basic and acidic residues predominate over residues Arg588–Val599. Residues Glu619–Val628 are compositionally biased toward acidic residues. Composition is skewed to acidic residues over residues Ser976 to Glu990 and Asp1054 to Phe1114. Basic and acidic residues predominate over residues Lys1159–Asp1174. Residues Leu1329–Leu1343 are compositionally biased toward basic and acidic residues. 2 stretches are compositionally biased toward polar residues: residues Leu1349–Ile1358 and Glu1441–Pro1453. The segment covering Ser1454 to Gly1464 has biased composition (pro residues). Polar residues predominate over residues Gln1751–Ala1765. The short motif at Arg1770–Arg1775 is the RxxxRR motif element. Residues Lys1799 to Lys1916 enclose the SET domain. An S-adenosyl-L-methionine-binding site is contributed by Tyr1915. In terms of domain architecture, Post-SET spans Val1922–Asn1938.

The protein belongs to the class V-like SAM-binding methyltransferase superfamily. Component of the SET1B/COMPASS complex.

It is found in the nucleus speckle. It localises to the chromosome. It carries out the reaction L-lysyl(4)-[histone H3] + 3 S-adenosyl-L-methionine = N(6),N(6),N(6)-trimethyl-L-lysyl(4)-[histone H3] + 3 S-adenosyl-L-homocysteine + 3 H(+). Functionally, histone methyltransferase that specifically methylates 'Lys-4' of histone H3, when part of the SET1 histone methyltransferase (HMT) complex, but not if the neighboring 'Lys-9' residue is already methylated. H3 'Lys-4' methylation represents a specific tag for epigenetic transcriptional activation. The polypeptide is Histone-lysine N-methyltransferase SETD1B (setd1b) (Xenopus laevis (African clawed frog)).